A 432-amino-acid polypeptide reads, in one-letter code: MSLQYQTGFGNACATEALPGALPAGRNSPQICPYGLYAEQLSGTAFTAPRAENRRSWLYRIRPGVQHLPFAPFAGAQRWLSDFGRQPVTPNQLRWSPLPMPDAPTDFIDGMHTWGGNGGPEEQSGVGIHLYAANRSMQGRFFYNADGEMLIVPQQGRLRLATELGLIDIEPYEIAVVPRGVRLRVELLDDVARGYMLENFGTAMRLPELGPIGSNCLANARDFQIPVAWYEDVEGDFELIAKFTGGFWRAPIAHSPLNVVAWHGTHAPYKYDLRNFNTVGSISYDHPDPSIFTVLTSPSDTPGTANMDFAIFPPRILAMENTFRPPWFHRNIASEFMGLIHGVYDAKAEGFAPGGASLHNCMSGHGPDADTFEKASHADTSQAHYIRDTMAFMFETRRVIRPTAQALASPQRQDDYYQCWQGLQKHFDPEQA.

The active-site Proton acceptor is His-286. Fe cation contacts are provided by His-329 and Glu-335. Tyr-344 and His-365 together coordinate homogentisate. His-365 lines the Fe cation pocket.

It belongs to the homogentisate dioxygenase family. As to quaternary structure, hexamer; dimer of trimers. Requires Fe cation as cofactor.

It catalyses the reaction homogentisate + O2 = 4-maleylacetoacetate + H(+). It functions in the pathway amino-acid degradation; L-phenylalanine degradation; acetoacetate and fumarate from L-phenylalanine: step 4/6. In terms of biological role, involved in the catabolism of homogentisate (2,5-dihydroxyphenylacetate or 2,5-OH-PhAc), a central intermediate in the degradation of phenylalanine and tyrosine. Catalyzes the oxidative ring cleavage of the aromatic ring of homogentisate to yield maleylacetoacetate. This Bordetella bronchiseptica (strain ATCC BAA-588 / NCTC 13252 / RB50) (Alcaligenes bronchisepticus) protein is Homogentisate 1,2-dioxygenase.